Reading from the N-terminus, the 441-residue chain is Proline--tRNA ligase (441 aa).

It belongs to the class-II aminoacyl-tRNA synthetase family. ProS type 2 subfamily. In terms of assembly, homodimer.

The protein localises to the cytoplasm. It carries out the reaction tRNA(Pro) + L-proline + ATP = L-prolyl-tRNA(Pro) + AMP + diphosphate. In terms of biological role, catalyzes the attachment of proline to tRNA(Pro) in a two-step reaction: proline is first activated by ATP to form Pro-AMP and then transferred to the acceptor end of tRNA(Pro). This chain is Proline--tRNA ligase, found in Methylorubrum populi (strain ATCC BAA-705 / NCIMB 13946 / BJ001) (Methylobacterium populi).